A 345-amino-acid polypeptide reads, in one-letter code: Selenide, water dikinase (345 aa).

Residue C16 is part of the active site. ATP is bound by residues K19 and 46-48; that span reads TSD. Position 49 (D49) interacts with Mg(2+). Residues D66, D89, and 136-138 contribute to the ATP site; that span reads GHT. D89 is a Mg(2+) binding site. D224 lines the Mg(2+) pocket.

Belongs to the selenophosphate synthase 1 family. Class I subfamily. Homodimer. Mg(2+) is required as a cofactor.

The enzyme catalyses hydrogenselenide + ATP + H2O = selenophosphate + AMP + phosphate + 2 H(+). Its function is as follows. Synthesizes selenophosphate from selenide and ATP. This Clostridium botulinum (strain Eklund 17B / Type B) protein is Selenide, water dikinase.